A 423-amino-acid polypeptide reads, in one-letter code: UDP-N-acetylglucosamine 1-carboxyvinyltransferase 2 (423 aa).

Residue 23-24 (KN) coordinates phosphoenolpyruvate. Arginine 93 provides a ligand contact to UDP-N-acetyl-alpha-D-glucosamine. Cysteine 117 functions as the Proton donor in the catalytic mechanism. Residue cysteine 117 is modified to 2-(S-cysteinyl)pyruvic acid O-phosphothioketal. Residues 122–126 (RPIDQ), aspartate 305, and isoleucine 327 each bind UDP-N-acetyl-alpha-D-glucosamine.

The protein belongs to the EPSP synthase family. MurA subfamily.

It localises to the cytoplasm. The catalysed reaction is phosphoenolpyruvate + UDP-N-acetyl-alpha-D-glucosamine = UDP-N-acetyl-3-O-(1-carboxyvinyl)-alpha-D-glucosamine + phosphate. It participates in cell wall biogenesis; peptidoglycan biosynthesis. Its function is as follows. Cell wall formation. Adds enolpyruvyl to UDP-N-acetylglucosamine. This is UDP-N-acetylglucosamine 1-carboxyvinyltransferase 2 from Listeria monocytogenes serotype 4b (strain F2365).